An 84-amino-acid polypeptide reads, in one-letter code: Large ribosomal subunit protein bL27 (84 aa).

Residues 1–21 are disordered; it reads MAHKKGVGSSRNGRDSDGQRL.

It belongs to the bacterial ribosomal protein bL27 family.

The protein is Large ribosomal subunit protein bL27 of Trichlorobacter lovleyi (strain ATCC BAA-1151 / DSM 17278 / SZ) (Geobacter lovleyi).